Reading from the N-terminus, the 259-residue chain is Transcription factor bHLH125 (259 aa).

The 53-residue stretch at 73–125 (SKKMKHRDIERQRRQEVSSLFKRLRTLLPFQYIQGKRSTSDHIVQAVNYIKDL) folds into the bHLH domain.

In terms of assembly, homodimer.

The protein localises to the nucleus. This Arabidopsis thaliana (Mouse-ear cress) protein is Transcription factor bHLH125 (BHLH125).